The following is a 395-amino-acid chain: MKKIEGGICAVKGVTANGIKLGKMGITVIRAEGPAAGVFTKNKVTAAPVVLSKGVIETQHQLSAIIANSGNANAFTGDDGFLDAMEMASALSESLDLEPDTVAVASTGVIGRRLDVSWIREHLPEVLEGLGSSPECSLAAAKAIMTTDKALKEVAVELDCGVRIGAIAKGSGMIEPNMGTMLCFAYTDALVPADVLDAALRIAVDKTFNMVVVDGDTSTNDMVLFTSTCKSGIKPCMECLDEFEDALIYLFTDLAKKMARDGEGATKLIEARVTGAKTYEDARLAVKAIVRSPLVKSAIFGKDPNWGRVVAAAGYSGAELEQERLSLSFSAGGETVELVKSGEISRVSDLALLNKIMANEEIIITLDFGMGKESATAWGCDLTYDYVRINAEYTT.

The substrate site is built by Thr146, Lys169, Thr180, Glu263, Asn390, and Thr395. The Nucleophile role is filled by Thr180.

It belongs to the ArgJ family. As to quaternary structure, heterotetramer of two alpha and two beta chains.

It is found in the cytoplasm. It carries out the reaction N(2)-acetyl-L-ornithine + L-glutamate = N-acetyl-L-glutamate + L-ornithine. It participates in amino-acid biosynthesis; L-arginine biosynthesis; L-ornithine and N-acetyl-L-glutamate from L-glutamate and N(2)-acetyl-L-ornithine (cyclic): step 1/1. Catalyzes the transfer of the acetyl group from N(2)-acetylornithine to glutamate, forming N-acetylglutamate and L-ornithine. The sequence is that of Glutamate N-acetyltransferase from Methanosarcina acetivorans (strain ATCC 35395 / DSM 2834 / JCM 12185 / C2A).